The chain runs to 312 residues: Olfactory receptor 4L1 (312 aa).

The Extracellular portion of the chain corresponds to 1–25 (MDLKNGSLVTEFILLGFFGRWELQI). A glycan (N-linked (GlcNAc...) asparagine) is linked at Asn-5. The helical transmembrane segment at 26–49 (FFFVTFSLIYGATVMGNILIMVTV) threads the bilayer. Over 50–57 (TCRSTLHS) the chain is Cytoplasmic. Residues 58–79 (PLYFLLGNLSFLDMCLSTATTP) traverse the membrane as a helical segment. Over 80–100 (KMIIDLLTDHKTISVWGCVTQ) the chain is Extracellular. Cys-97 and Cys-189 form a disulfide bridge. The chain crosses the membrane as a helical span at residues 101–120 (MFFMHFFGGAEMTLLIIMAF). At 121-139 (DRYVAICKPLHYRTIMSHK) the chain is on the cytoplasmic side. Residues 140 to 158 (LLKGFAILSWIIGFLHSIS) traverse the membrane as a helical segment. Residues 159–195 (QIVLTMNLPFCGHNVINNIFCDLPLVIKLACIETYTL) lie on the Extracellular side of the membrane. Residues 196-219 (ELFVIADSGLLSFTCFILLLVSYI) form a helical membrane-spanning segment. Topologically, residues 220-235 (VILVSVPKKSSHGLSK) are cytoplasmic. A helical transmembrane segment spans residues 236 to 258 (ALSTLSAHIIVVTLFFGPCIFIY). The Extracellular portion of the chain corresponds to 259-269 (VWPFSSLASNK). Asn-268 carries N-linked (GlcNAc...) asparagine glycosylation. A helical membrane pass occupies residues 270-289 (TLAVFYTVITPLLNPSIYTL). Residues 290 to 312 (RNKKMQEAIRKLRFQYVSSAQNF) lie on the Cytoplasmic side of the membrane.

Belongs to the G-protein coupled receptor 1 family.

It is found in the cell membrane. Odorant receptor. The polypeptide is Olfactory receptor 4L1 (OR4L1) (Homo sapiens (Human)).